Reading from the N-terminus, the 269-residue chain is Surfeit locus protein 4 (269 aa).

Transmembrane regions (helical) follow at residues 65 to 85 (LASS…VLVL), 92 to 112 (YACF…SILW), 179 to 199 (FFSI…AIGF), 203 to 223 (LAAL…NAFW), and 242 to 262 (TMSV…GVSM). A Di-lysine motif motif is present at residues 266–269 (KKEW).

This sequence belongs to the SURF4 family. Found in a complex composed at least of SURF4, TMED2 and TMED10. May interact with LMAN1. Interacts with ZFYVE27 and with KIF5A in a ZFYVE27-dependent manner. Interacts with STING1. Interacts with SAR1B. Interacts with TMEM41B.

The protein localises to the endoplasmic reticulum membrane. The protein resides in the endoplasmic reticulum-Golgi intermediate compartment membrane. It localises to the golgi apparatus membrane. Functionally, endoplasmic reticulum cargo receptor that mediates the export of lipoproteins by recruiting cargos into COPII vesicles to facilitate their secretion. Acts as a cargo receptor for lipoproteins bearing both APOB and APOA1, thereby regulating lipoprotein delivery and the maintenance of lipid homeostasis. Synergizes with the GTPase SAR1B to mediate transport of circulating lipoproteins. Promotes the secretion of PCSK9. Also mediates the efficient secretion of erythropoietin (EPO). May also play a role in the maintenance of the architecture of the endoplasmic reticulum-Golgi intermediate compartment and of the Golgi. The polypeptide is Surfeit locus protein 4 (Mus musculus (Mouse)).